We begin with the raw amino-acid sequence, 446 residues long: Probable rhamnogalacturonase A (446 aa).

Positions 1–18 (MPALPILALALAPLLVNG) are cleaved as a signal peptide. Cysteine 39 and cysteine 65 are joined by a disulfide. N-linked (GlcNAc...) asparagine glycosylation is found at asparagine 50, asparagine 115, and asparagine 124. Catalysis depends on aspartate 216, which acts as the Proton donor. Residues cysteine 218 and cysteine 235 are joined by a disulfide bond. N-linked (GlcNAc...) asparagine glycans are attached at residues asparagine 236 and asparagine 281. The active site involves histidine 291. Asparagine 318 carries N-linked (GlcNAc...) asparagine glycosylation. Disulfide bonds link cysteine 341–cysteine 347 and cysteine 369–cysteine 378.

This sequence belongs to the glycosyl hydrolase 28 family.

The protein resides in the secreted. It catalyses the reaction Endohydrolysis of alpha-D-GalA-(1-&gt;2)-alpha-L-Rha glycosidic bond in the rhamnogalacturonan I backbone with initial inversion of anomeric configuration releasing oligosaccharides with beta-D-GalA at the reducing end.. Its function is as follows. Pectinolytic enzymes consist of four classes of enzymes: pectine lyase, polygalacturonase, pectin methylesterase and rhamnogalacturonase. Hydrolyzes alpha-D-galacturonopyranosyl-(1,2)-alpha-L-rhamnopyranosyl linkages in the backbone of the hairy regions of pectins. This chain is Probable rhamnogalacturonase A (rhgA), found in Aspergillus niger (strain ATCC MYA-4892 / CBS 513.88 / FGSC A1513).